Here is a 94-residue protein sequence, read N- to C-terminus: Small ribosomal subunit protein uS19 (94 aa).

It belongs to the universal ribosomal protein uS19 family.

Protein S19 forms a complex with S13 that binds strongly to the 16S ribosomal RNA. This is Small ribosomal subunit protein uS19 from Clostridium novyi (strain NT).